Consider the following 88-residue polypeptide: Small ribosomal subunit protein uS15 (88 aa).

This sequence belongs to the universal ribosomal protein uS15 family. As to quaternary structure, part of the 30S ribosomal subunit. Forms a bridge to the 50S subunit in the 70S ribosome, contacting the 23S rRNA.

One of the primary rRNA binding proteins, it binds directly to 16S rRNA where it helps nucleate assembly of the platform of the 30S subunit by binding and bridging several RNA helices of the 16S rRNA. Its function is as follows. Forms an intersubunit bridge (bridge B4) with the 23S rRNA of the 50S subunit in the ribosome. The protein is Small ribosomal subunit protein uS15 of Polaromonas naphthalenivorans (strain CJ2).